The chain runs to 276 residues: N-acyl homoserine lactonase AiiB (276 aa).

Zn(2+) is bound by residues histidine 111, histidine 113, histidine 116, histidine 191, aspartate 213, and histidine 259.

The protein belongs to the metallo-beta-lactamase superfamily. Requires Zn(2+) as cofactor.

It catalyses the reaction an N-acyl-L-homoserine lactone + H2O = an N-acyl-L-homoserine + H(+). The protein is N-acyl homoserine lactonase AiiB of Agrobacterium fabrum (strain C58 / ATCC 33970) (Agrobacterium tumefaciens (strain C58)).